A 710-amino-acid chain; its full sequence is Gastrulation-defective protein 3 (710 aa).

A helical membrane pass occupies residues 597–615 (AYYVFTVLALIISNFPTIV).

Its subcellular location is the membrane. In Caenorhabditis elegans, this protein is Gastrulation-defective protein 3 (gadr-3).